Here is a 532-residue protein sequence, read N- to C-terminus: Collagen alpha-1(XXIII) chain (532 aa).

Residues 1–23 (MGAGERAAGGGGAQDPGAGCGSR) are Cytoplasmic-facing. The helical; Signal-anchor for type II membrane protein transmembrane segment at 24-45 (ALSALCLLLSVGSAAACLLLGA) threads the bilayer. Over 46 to 532 (QAAALHGRVA…GLPVPGCWHK (487 aa)) the chain is Extracellular. Disordered regions lie at residues 102 to 296 (PSEC…GEQG) and 308 to 532 (LDAL…CWHK). 4 consecutive Collagen-like domains span residues 108–166 (PPGP…RGAQ), 173–232 (GPPG…PGKK), 240–298 (QPGL…QGDT), and 313–372 (GPPG…MGLS). A compositionally biased stretch (low complexity) spans 129–145 (QSGRDGYPGPLGLDGKP). Residues 174–184 (PPGPPGPPGAR) show a composition bias toward pro residues. Residues 196–207 (RGAQGPAGPRGE) show a composition bias toward low complexity. Over residues 314–326 (PPGPQGAPGPPGI) the composition is skewed to pro residues. Composition is skewed to basic and acidic residues over residues 342–354 (DGEK…KGDP) and 380–393 (PKGE…DHLQ). Pro residues predominate over residues 403-414 (PGPPGPPGPPGP). 2 Collagen-like domains span residues 404–452 (GPPG…GPPG) and 455–514 (GLPG…PGLD). 2 stretches are compositionally biased toward basic and acidic residues: residues 427-441 (DGAK…ERGP) and 478-495 (RGEK…ERGV).

Homotrimer. In terms of processing, undergoes proteolytic cleavage by furin protease to yield a 60 kDa soluble form that forms a homotrimer and exhibits a low affinity interaction with heparin.

It is found in the cell membrane. The polypeptide is Collagen alpha-1(XXIII) chain (Col23a1) (Mus musculus (Mouse)).